We begin with the raw amino-acid sequence, 388 residues long: Norsolorinic acid reductase A (388 aa).

Asp69 is a binding site for NADP(+). Tyr74 serves as the catalytic Proton donor. His148 contributes to the substrate binding site. NADP(+) contacts are provided by residues 178–179 (SD), Gln204, 233–243 (GVLGRGQFRSA), and 300–308 (RKVEHLKEN).

The protein belongs to the aldo/keto reductase family. Aldo/keto reductase 2 subfamily.

Its pathway is mycotoxin biosynthesis; aflatoxin biosynthesis. Functionally, norsolorinic acid reductase; part of the gene cluster that mediates the biosynthesis of aflatoxins, a group of polyketide-derived furanocoumarins, and part of the most toxic and carcinogenic compounds among the known mycotoxins. The four major aflatoxins produced by A.parasiticus are aflatoxin B1 (AFB1), aflatoxin B2 (AFB2), aflatoxin G1 (AFG1) and aflatoxin G2 (AFG2). Within the aflatoxin pathway, the norsolorinic acid reductase aflE may play a role in the conversion of norsolorinic acid (NOR) to averantin (AVN). The biosynthesis of aflatoxins begins with the norsolorinic acid synthase aflC that combines a hexanoyl starter unit produced by the fatty acid synthase aflA/aflB and 7 malonyl-CoA extender units to synthesize the precursor NOR. The second step is the conversion of NOR to averantin and requires the norsolorinic acid ketoreductase aflD, which catalyzes the dehydration of norsolorinic acid to form (1'S)-averantin. The norsolorinic acid reductases aflE and aflF may also play a role in the conversion of NOR to AVN. The cytochrome P450 monooxygenase aflG then catalyzes the hydroxylation of AVN to 5'hydroxyaverantin (HAVN). The next step is performed by the 5'-hydroxyaverantin dehydrogenase aflH that transforms HAVN to 5'-oxoaverantin (OAVN) which is further converted to averufin (AVF) by aflK that plays a dual role in the pathway, as a 5'-oxoaverantin cyclase that mediates conversion of 5'-oxoaverantin, as well as a versicolorin B synthase in a later step in the pathway. The averufin oxidase aflI catalyzes the conversion of AVF to versiconal hemiacetal acetate (VHA). VHA is then the substrate for the versiconal hemiacetal acetate esterase aflJ to yield versiconal (VAL). Versicolorin B synthase aflK then converts VAL to versicolorin B (VERB) by closing the bisfuran ring of aflatoxin which is required for DNA-binding, thus giving to aflatoxin its activity as a mutagen. Then, the activity of the versicolorin B desaturase aflL leads to versicolorin A (VERA). A branch point starts from VERB since it can also be converted to dihydrodemethylsterigmatocystin (DMDHST), probably also by aflL, VERA being a precursor for aflatoxins B1 and G1, and DMDHST for aflatoxins B2 and G2. Next, the versicolorin reductase aflM and the cytochrome P450 monooxygenase aflN are involved in conversion of VERA to demethylsterigmatocystin (DMST). AflX and aflY seem also involved in this step, through probable aflX-mediated epoxide ring-opening step following versicolorin A oxidation and aflY-mediated Baeyer-Villiger oxidation required for the formation of the xanthone ring. The methyltransferase aflO then leads to the modification of DMST to sterigmatocystin (ST), and of DMDHST to dihydrosterigmatocystin (DHST). Both ST and DHST are then substrates of the O-methyltransferase aflP to yield O-methylsterigmatocystin (OMST) and dihydro-O-methylsterigmatocystin (DHOMST), respectively. Finally OMST is converted to aflatoxins B1 and G1, and DHOMST to aflatoxins B2 and G2, via the action of several enzymes including O-methylsterigmatocystin oxidoreductase aflQ, the cytochrome P450 monooxygenase aflU, but also the NADH-dependent flavin oxidoreductase nadA which is specifically required for the synthesis of AFG1. This chain is Norsolorinic acid reductase A, found in Aspergillus parasiticus (strain ATCC 56775 / NRRL 5862 / SRRC 143 / SU-1).